The sequence spans 148 residues: Lysozyme-like protein 2 (148 aa).

The signal sequence occupies residues 1-19 (MKAAGILTLIGCLVTGAES). In terms of domain architecture, C-type lysozyme spans 20–148 (KIYTRCKLAK…SDWKKDCEVS (129 aa)). 4 cysteine pairs are disulfide-bonded: cysteine 25–cysteine 145, cysteine 49–cysteine 133, cysteine 83–cysteine 98, and cysteine 94–cysteine 112. Glutamate 54 is a catalytic residue. Residue asparagine 58 is glycosylated (N-linked (GlcNAc...) asparagine). Aspartate 71 is an active-site residue.

This sequence belongs to the glycosyl hydrolase 22 family. Monomer. In terms of tissue distribution, expressed in testis, epididymis and placenta.

The protein resides in the secreted. It carries out the reaction Hydrolysis of (1-&gt;4)-beta-linkages between N-acetylmuramic acid and N-acetyl-D-glucosamine residues in a peptidoglycan and between N-acetyl-D-glucosamine residues in chitodextrins.. This chain is Lysozyme-like protein 2 (LYZL2), found in Homo sapiens (Human).